The following is a 258-amino-acid chain: Global transcriptional regulator CodY (258 aa).

The interval 1 to 156 is GAF domain; that stretch reads MSSLLDKTRM…SATIIGLEIL (156 aa). Residues 204 to 223 constitute a DNA-binding region (H-T-H motif); it reads ASKIADKVGITRSVIVNALR.

Belongs to the CodY family.

The protein localises to the cytoplasm. In terms of biological role, DNA-binding global transcriptional regulator which is involved in the adaptive response to starvation and acts by directly or indirectly controlling the expression of numerous genes in response to nutrient availability. During rapid exponential growth, CodY is highly active and represses genes whose products allow adaptation to nutrient depletion. The chain is Global transcriptional regulator CodY from Clostridium botulinum (strain Okra / Type B1).